The primary structure comprises 501 residues: ATP synthase subunit alpha (501 aa).

Residue 169–176 (GDRQTGKT) coordinates ATP.

This sequence belongs to the ATPase alpha/beta chains family. As to quaternary structure, F-type ATPases have 2 components, CF(1) - the catalytic core - and CF(0) - the membrane proton channel. CF(1) has five subunits: alpha(3), beta(3), gamma(1), delta(1), epsilon(1). CF(0) has three main subunits: a(1), b(2) and c(9-12). The alpha and beta chains form an alternating ring which encloses part of the gamma chain. CF(1) is attached to CF(0) by a central stalk formed by the gamma and epsilon chains, while a peripheral stalk is formed by the delta and b chains.

It localises to the cell membrane. The enzyme catalyses ATP + H2O + 4 H(+)(in) = ADP + phosphate + 5 H(+)(out). Its function is as follows. Produces ATP from ADP in the presence of a proton gradient across the membrane. The alpha chain is a regulatory subunit. The chain is ATP synthase subunit alpha from Streptococcus agalactiae serotype Ia (strain ATCC 27591 / A909 / CDC SS700).